Reading from the N-terminus, the 337-residue chain is Glyceraldehyde-3-phosphate dehydrogenase 3, cytosolic (337 aa).

The segment at methionine 1 to asparagine 151 is binding to NAD. NAD(+) is bound by residues arginine 13–isoleucine 14, aspartate 35, and arginine 82. Residues alanine 152–lysine 337 are catalytic. D-glyceraldehyde 3-phosphate-binding positions include serine 153–threonine 155, threonine 184, threonine 213–glycine 214, and arginine 236. Cysteine 154 functions as the Nucleophile in the catalytic mechanism. Residue asparagine 318 participates in NAD(+) binding.

It belongs to the glyceraldehyde-3-phosphate dehydrogenase family. As to quaternary structure, homotetramer.

Its subcellular location is the cytoplasm. The enzyme catalyses D-glyceraldehyde 3-phosphate + phosphate + NAD(+) = (2R)-3-phospho-glyceroyl phosphate + NADH + H(+). Its pathway is carbohydrate degradation; glycolysis; pyruvate from D-glyceraldehyde 3-phosphate: step 1/5. Functionally, key enzyme in glycolysis that catalyzes the first step of the pathway by converting D-glyceraldehyde 3-phosphate (G3P) into 3-phospho-D-glyceroyl phosphate. Essential for the maintenance of cellular ATP levels and carbohydrate metabolism. This is Glyceraldehyde-3-phosphate dehydrogenase 3, cytosolic (GAPC3) from Zea mays (Maize).